Here is a 945-residue protein sequence, read N- to C-terminus: Netrin receptor UNC5B (945 aa).

The first 26 residues, 1 to 26 (MGARSGARGALLLALLLCWDPRLSQA), serve as a signal peptide directing secretion. Residues 27 to 377 (GTDSGSEVLP…LEASGDAALY (351 aa)) are Extracellular-facing. The Ig-like domain occupies 48–145 (PYFLQEPQDA…AGTTKSRRAY (98 aa)). Intrachain disulfides connect C69/C130, C81/C128, C174/C225, C258/C295, C262/C299, C273/C285, C314/C348, C318/C353, and C326/C338. One can recognise an Ig-like C2-type domain in the interval 147-242 (RIAYLRKNFD…KRRSTTATVI (96 aa)). The N-linked (GlcNAc...) asparagine glycan is linked to N222. 2 TSP type-1 domains span residues 246–300 (NGGW…TICP) and 302–354 (DGAW…GLCM). The N-linked (GlcNAc...) asparagine glycan is linked to N347. Residues 378 to 398 (AGLVVAIFVVVAILMAVGVVV) traverse the membrane as a helical segment. At 399-945 (YRRNCRDFDT…LVAVATDGDC (547 aa)) the chain is on the cytoplasmic side. A lipid anchor (S-palmitoyl cysteine) is attached at C403. Residues 543-686 (SSVSGTFGCL…LGTYVFTGES (144 aa)) enclose the ZU5 domain. Y581 is modified (phosphotyrosine). The tract at residues 689–838 (RSAVKRLQLA…AETPAGSLDT (150 aa)) is UPA domain. Residues 707–725 (SLEYSLRVYCLEDTPVALK) form an interaction with DCC region. A Death domain is found at 865–943 (KICNSLDAPN…EMLVAVATDG (79 aa)).

This sequence belongs to the unc-5 family. As to quaternary structure, interacts with the cytoplasmic part of DCC. Interacts with GNAI2 via its cytoplasmic part. Interacts (via death domain) with DAPK1 (via death domain). Interacts (via extracellular domain) with FLRT3 (via extracellular domain); the interaction is direct. Interacts (via extracellular domain) with FLRT2 and FLRT3 (via extracellular domain), but has higher affinity for FLRT3. Identified in a complex with FLRT3 and ADGRL3; does not interact with ADGRL3 by itself. Phosphorylated on cytoplasmic tyrosine residues. Post-translationally, proteolytically cleaved by caspases during apoptosis. The cleavage does not take place when the receptor is associated with netrin ligand. Its cleavage by caspases is required to induce apoptosis. In terms of processing, palmitoylation is required for pro-apoptotic activity, but not for location at lipid rafts. In terms of tissue distribution, highly expressed in brain. Also expressed at lower level in developing lung, cartilage, kidney and hematopoietic and immune tissues.

It localises to the cell membrane. The protein localises to the membrane raft. Its function is as follows. Receptor for netrin required for axon guidance. Mediates axon repulsion of neuronal growth cones in the developing nervous system upon ligand binding. Axon repulsion in growth cones may be caused by its association with DCC that may trigger signaling for repulsion. Functions as a netrin receptor that negatively regulates vascular branching during angiogenesis. Mediates retraction of tip cell filopodia on endothelial growth cones in response to netrin. It also acts as a dependence receptor required for apoptosis induction when not associated with netrin ligand. Mediates apoptosis by activating DAPK1. In the absence of NTN1, activates DAPK1 by reducing its autoinhibitory phosphorylation at Ser-308 thereby increasing its catalytic activity. This Homo sapiens (Human) protein is Netrin receptor UNC5B (UNC5B).